Here is a 230-residue protein sequence, read N- to C-terminus: Ribose-5-phosphate isomerase A (230 aa).

Residues 29 to 32, 85 to 88, and 98 to 101 contribute to the substrate site; these read TGST, DGAD, and KGGG. Glu107 serves as the catalytic Proton acceptor. Lys125 is a substrate binding site.

The protein belongs to the ribose 5-phosphate isomerase family. Homodimer.

It carries out the reaction aldehydo-D-ribose 5-phosphate = D-ribulose 5-phosphate. It participates in carbohydrate degradation; pentose phosphate pathway; D-ribose 5-phosphate from D-ribulose 5-phosphate (non-oxidative stage): step 1/1. Catalyzes the reversible conversion of ribose-5-phosphate to ribulose 5-phosphate. The chain is Ribose-5-phosphate isomerase A from Staphylococcus epidermidis (strain ATCC 35984 / DSM 28319 / BCRC 17069 / CCUG 31568 / BM 3577 / RP62A).